The primary structure comprises 227 residues: Enolase-phosphatase E1 (227 aa).

Asp11 and Glu13 together coordinate Mg(2+). Residues 118 to 119 (SS) and Lys161 each bind substrate. Asp186 is a Mg(2+) binding site.

This sequence belongs to the HAD-like hydrolase superfamily. MasA/MtnC family. Monomer. It depends on Mg(2+) as a cofactor.

The protein resides in the cytoplasm. The protein localises to the nucleus. It carries out the reaction 5-methylsulfanyl-2,3-dioxopentyl phosphate + H2O = 1,2-dihydroxy-5-(methylsulfanyl)pent-1-en-3-one + phosphate. It functions in the pathway amino-acid biosynthesis; L-methionine biosynthesis via salvage pathway; L-methionine from S-methyl-5-thio-alpha-D-ribose 1-phosphate: step 3/6. The protein operates within amino-acid biosynthesis; L-methionine biosynthesis via salvage pathway; L-methionine from S-methyl-5-thio-alpha-D-ribose 1-phosphate: step 4/6. Its function is as follows. Bifunctional enzyme that catalyzes the enolization of 2,3-diketo-5-methylthiopentyl-1-phosphate (DK-MTP-1-P) into the intermediate 2-hydroxy-3-keto-5-methylthiopentenyl-1-phosphate (HK-MTPenyl-1-P), which is then dephosphorylated to form the acireductone 1,2-dihydroxy-3-keto-5-methylthiopentene (DHK-MTPene). The polypeptide is Enolase-phosphatase E1 (Saccharomyces cerevisiae (strain YJM789) (Baker's yeast)).